The chain runs to 433 residues: tRNA-queuosine alpha-mannosyltransferase (433 aa).

Residues 194–244 (PAAKSHIQTSSPSSYPDVEPPEKMLNVAGTNQSHEPTSVTPHQETASPLCG) form a disordered region. Residues 221–239 (AGTNQSHEPTSVTPHQETA) show a composition bias toward polar residues.

The protein belongs to the glycosyltransferase group 1 family. Glycosyltransferase 4 subfamily.

The protein resides in the cytoplasm. Its subcellular location is the nucleus. It catalyses the reaction queuosine(34) in tRNA(Asp) + GDP-alpha-D-mannose = O-4''-alpha-D-mannosylqueuosine(34) in tRNA(Asp) + GDP + H(+). In terms of biological role, glycosyltransferase that specifically catalyzes mannosylation of cytoplasmic tRNA(Asp) modified with queuosine at position 34 (queuosine(34)). Mannosylates the cyclopentene moiety of queuosine(34) in tRNA(Asp) to form mannosyl-queuosine(34). Mannosylation of queuosine(34) in tRNA(Asp) is required to slow-down elongation at cognate codons, GAC and GAU, thereby regulating protein translation. The chain is tRNA-queuosine alpha-mannosyltransferase (gtdc1) from Danio rerio (Zebrafish).